The chain runs to 457 residues: Bifunctional protein GlmU (457 aa).

The segment at 1–230 (MSKRYAVVLA…FEESLGVNDR (230 aa)) is pyrophosphorylase. UDP-N-acetyl-alpha-D-glucosamine-binding positions include 9–12 (LAAG), lysine 23, glutamine 73, and 78–79 (GT). A Mg(2+)-binding site is contributed by aspartate 103. 4 residues coordinate UDP-N-acetyl-alpha-D-glucosamine: glycine 140, glutamate 155, asparagine 170, and asparagine 228. Residue asparagine 228 participates in Mg(2+) binding. A linker region spans residues 231-251 (IALAEASKLMQRRINENHMRN). The interval 252–457 (GVTLVNPEST…GYAKHLNHGK (206 aa)) is N-acetyltransferase. UDP-N-acetyl-alpha-D-glucosamine contacts are provided by arginine 333 and lysine 351. Histidine 363 (proton acceptor) is an active-site residue. Residues tyrosine 366 and asparagine 377 each contribute to the UDP-N-acetyl-alpha-D-glucosamine site. Acetyl-CoA is bound by residues 386 to 387 (NY), alanine 423, and arginine 440.

The protein in the N-terminal section; belongs to the N-acetylglucosamine-1-phosphate uridyltransferase family. In the C-terminal section; belongs to the transferase hexapeptide repeat family. In terms of assembly, homotrimer. It depends on Mg(2+) as a cofactor.

The protein resides in the cytoplasm. It carries out the reaction alpha-D-glucosamine 1-phosphate + acetyl-CoA = N-acetyl-alpha-D-glucosamine 1-phosphate + CoA + H(+). It catalyses the reaction N-acetyl-alpha-D-glucosamine 1-phosphate + UTP + H(+) = UDP-N-acetyl-alpha-D-glucosamine + diphosphate. The protein operates within nucleotide-sugar biosynthesis; UDP-N-acetyl-alpha-D-glucosamine biosynthesis; N-acetyl-alpha-D-glucosamine 1-phosphate from alpha-D-glucosamine 6-phosphate (route II): step 2/2. Its pathway is nucleotide-sugar biosynthesis; UDP-N-acetyl-alpha-D-glucosamine biosynthesis; UDP-N-acetyl-alpha-D-glucosamine from N-acetyl-alpha-D-glucosamine 1-phosphate: step 1/1. It participates in bacterial outer membrane biogenesis; LPS lipid A biosynthesis. Functionally, catalyzes the last two sequential reactions in the de novo biosynthetic pathway for UDP-N-acetylglucosamine (UDP-GlcNAc). The C-terminal domain catalyzes the transfer of acetyl group from acetyl coenzyme A to glucosamine-1-phosphate (GlcN-1-P) to produce N-acetylglucosamine-1-phosphate (GlcNAc-1-P), which is converted into UDP-GlcNAc by the transfer of uridine 5-monophosphate (from uridine 5-triphosphate), a reaction catalyzed by the N-terminal domain. This is Bifunctional protein GlmU from Listeria monocytogenes serotype 4a (strain HCC23).